The following is a 2727-amino-acid chain: E3 ubiquitin-protein ligase Ufd4 (2727 aa).

Disordered stretches follow at residues 247–271 and 365–389; these read THSS…TNSD and RGSN…TDRT. Polar residues predominate over residues 365–374; it reads RGSNNPNQGQ. ANK repeat units follow at residues 422 to 451, 453 to 482, and 486 to 518; these read VGQT…DVNK, QRSS…YPDL, and DGKT…WMSP. The tract at residues 682–702 is disordered; that stretch reads AQRSSTSVVVAPRPTSDDPME. The MIB/HERC2 domain occupies 1322–1392; the sequence is QIRAQLKHMT…KYDLKLADCE (71 aa). Composition is skewed to polar residues over residues 1401–1430 and 1437–1448; these read QSMG…STPS and KNQNPEGASNQT. 6 disordered regions span residues 1401–1448, 1483–1512, 1570–1592, 1845–1871, 1905–1930, and 2092–2115; these read QSMG…SNQT, NTSS…GPSP, ESVT…REND, YPSL…QQSA, ALLG…DEYE, and STCL…ASTL. Over residues 1575 to 1592 the composition is skewed to low complexity; it reads SQSSSHPDVQSSSPREND. The span at 1909–1930 shows a compositional bias: acidic residues; that stretch reads DLDDEDDMDEDNDEEENEDEYE. The segment covering 2104-2115 has biased composition (polar residues); that stretch reads PDVSSKSGASTL. One can recognise an HECT domain in the interval 2289–2727; the sequence is RKSVLEVEFL…ATKEKGFHLN (439 aa). The active-site Glycyl thioester intermediate is C2696.

Belongs to the UPL family. K-HECT subfamily.

The enzyme catalyses S-ubiquitinyl-[E2 ubiquitin-conjugating enzyme]-L-cysteine + [acceptor protein]-L-lysine = [E2 ubiquitin-conjugating enzyme]-L-cysteine + N(6)-ubiquitinyl-[acceptor protein]-L-lysine.. It functions in the pathway protein modification; protein ubiquitination. Functionally, E3 ubiquitin-protein ligase which accepts ubiquitin from an E2 ubiquitin-conjugating enzyme in the form of a thioester and then directly transfers the ubiquitin to targeted substrates. Involved in the negative regulation of the Ras/MAPK signaling pathway in the wing by acting with the E2 enzyme Unc6 and the putative E3 ligases poe and Kcmf1 to mediate the ubiquitination and proteasomal degradation of rl/MAPK. In Drosophila melanogaster (Fruit fly), this protein is E3 ubiquitin-protein ligase Ufd4.